The chain runs to 390 residues: Anhydro-N-acetylmuramic acid kinase (390 aa).

9–16 lines the ATP pocket; that stretch reads GTSLDGID.

Belongs to the anhydro-N-acetylmuramic acid kinase family.

It catalyses the reaction 1,6-anhydro-N-acetyl-beta-muramate + ATP + H2O = N-acetyl-D-muramate 6-phosphate + ADP + H(+). Its pathway is amino-sugar metabolism; 1,6-anhydro-N-acetylmuramate degradation. It participates in cell wall biogenesis; peptidoglycan recycling. Its function is as follows. Catalyzes the specific phosphorylation of 1,6-anhydro-N-acetylmuramic acid (anhMurNAc) with the simultaneous cleavage of the 1,6-anhydro ring, generating MurNAc-6-P. Is required for the utilization of anhMurNAc either imported from the medium or derived from its own cell wall murein, and thus plays a role in cell wall recycling. In Bacillus cereus (strain B4264), this protein is Anhydro-N-acetylmuramic acid kinase.